A 252-amino-acid chain; its full sequence is Large ribosomal subunit protein uL4 (252 aa).

It belongs to the universal ribosomal protein uL4 family. In terms of assembly, part of the 50S ribosomal subunit.

In terms of biological role, one of the primary rRNA binding proteins, this protein initially binds near the 5'-end of the 23S rRNA. It is important during the early stages of 50S assembly. It makes multiple contacts with different domains of the 23S rRNA in the assembled 50S subunit and ribosome. Its function is as follows. Forms part of the polypeptide exit tunnel. The chain is Large ribosomal subunit protein uL4 from Methanococcus maripaludis (strain DSM 14266 / JCM 13030 / NBRC 101832 / S2 / LL).